The following is an 827-amino-acid chain: Leucine--tRNA ligase (827 aa).

A 'HIGH' region motif is present at residues 42-52 (PYPSGNLHMGH). The 'KMSKS' region signature appears at 583–587 (KMSKS). Lys-586 is a binding site for ATP.

Belongs to the class-I aminoacyl-tRNA synthetase family.

It localises to the cytoplasm. It carries out the reaction tRNA(Leu) + L-leucine + ATP = L-leucyl-tRNA(Leu) + AMP + diphosphate. This Desulfitobacterium hafniense (strain DSM 10664 / DCB-2) protein is Leucine--tRNA ligase.